Here is a 62-residue protein sequence, read N- to C-terminus: Conotoxin Mi5.2 (62 aa).

An N-terminal signal peptide occupies residues Met-1–Ser-19. Positions Val-20–Arg-50 are excised as a propeptide.

The protein belongs to the conotoxin T superfamily. In terms of processing, contains 2 disulfide bonds that can be either 'C1-C3, C2-C4' or 'C1-C4, C2-C3', since these disulfide connectivities have been observed for conotoxins with cysteine framework V (for examples, see AC P0DQQ7 and AC P81755). Expressed by the venom duct.

The protein resides in the secreted. In Conus miles (Soldier cone), this protein is Conotoxin Mi5.2.